We begin with the raw amino-acid sequence, 340 residues long: Protein jhp_1168 (340 aa).

In terms of assembly, seems to interact with H.pylori HolB.

Could be the functional equivalent of DNA polymerase III delta subunit (HolA). This Helicobacter pylori (strain J99 / ATCC 700824) (Campylobacter pylori J99) protein is Protein jhp_1168.